The chain runs to 94 residues: MPISSEDAAKVAKLARLRLDDDKLERFAGQMDGILAYMETLGSVDTAGVEPLYSPVTHETPMRADVAAKACSRDQILANAPATDGQFFIVPKIV.

The protein belongs to the GatC family. As to quaternary structure, heterotrimer of A, B and C subunits.

The enzyme catalyses L-glutamyl-tRNA(Gln) + L-glutamine + ATP + H2O = L-glutaminyl-tRNA(Gln) + L-glutamate + ADP + phosphate + H(+). It carries out the reaction L-aspartyl-tRNA(Asn) + L-glutamine + ATP + H2O = L-asparaginyl-tRNA(Asn) + L-glutamate + ADP + phosphate + 2 H(+). Its function is as follows. Allows the formation of correctly charged Asn-tRNA(Asn) or Gln-tRNA(Gln) through the transamidation of misacylated Asp-tRNA(Asn) or Glu-tRNA(Gln) in organisms which lack either or both of asparaginyl-tRNA or glutaminyl-tRNA synthetases. The reaction takes place in the presence of glutamine and ATP through an activated phospho-Asp-tRNA(Asn) or phospho-Glu-tRNA(Gln). This is Aspartyl/glutamyl-tRNA(Asn/Gln) amidotransferase subunit C from Solidesulfovibrio magneticus (strain ATCC 700980 / DSM 13731 / RS-1) (Desulfovibrio magneticus).